Reading from the N-terminus, the 378-residue chain is Ribosomal RNA large subunit methyltransferase G (378 aa).

It belongs to the methyltransferase superfamily. RlmG family.

Its subcellular location is the cytoplasm. The enzyme catalyses guanosine(1835) in 23S rRNA + S-adenosyl-L-methionine = N(2)-methylguanosine(1835) in 23S rRNA + S-adenosyl-L-homocysteine + H(+). Its function is as follows. Specifically methylates the guanine in position 1835 (m2G1835) of 23S rRNA. This Shewanella baltica (strain OS195) protein is Ribosomal RNA large subunit methyltransferase G.